Here is a 93-residue protein sequence, read N- to C-terminus: Acylphosphatase (93 aa).

In terms of domain architecture, Acylphosphatase-like spans 5–91 (RAHFLVKGFV…RGETTFRIRS (87 aa)). Active-site residues include Arg-20 and Asn-38.

It belongs to the acylphosphatase family.

The catalysed reaction is an acyl phosphate + H2O = a carboxylate + phosphate + H(+). This chain is Acylphosphatase (acyP), found in Moorella thermoacetica (strain ATCC 39073 / JCM 9320).